The sequence spans 253 residues: Phosphoadenosine 5'-phosphosulfate reductase (253 aa).

The Nucleophile; cysteine thiosulfonate intermediate role is filled by Cys-239.

The protein belongs to the PAPS reductase family. CysH subfamily.

It is found in the cytoplasm. The catalysed reaction is [thioredoxin]-disulfide + sulfite + adenosine 3',5'-bisphosphate + 2 H(+) = [thioredoxin]-dithiol + 3'-phosphoadenylyl sulfate. It participates in sulfur metabolism; hydrogen sulfide biosynthesis; sulfite from sulfate: step 3/3. Catalyzes the formation of sulfite from phosphoadenosine 5'-phosphosulfate (PAPS) using thioredoxin as an electron donor. The polypeptide is Phosphoadenosine 5'-phosphosulfate reductase (Aliivibrio salmonicida (strain LFI1238) (Vibrio salmonicida (strain LFI1238))).